Reading from the N-terminus, the 213-residue chain is General transcription factor 3C polypeptide 6 (213 aa).

The segment covering 1–11 has biased composition (basic and acidic residues); that stretch reads MAAAADERSPE. 2 disordered regions span residues 1 to 20 and 191 to 213; these read MAAA…EEEE and SGPL…QMLP. N-acetylalanine is present on A2. At S9 the chain carries Phosphoserine.

The protein belongs to the TFIIIC subunit 6 family. In terms of assembly, part of the TFIIIC subcomplex TFIIIC2, consisting of six subunits, GTF3C1, GTF3C2, GTF3C3, GTF3C4, GTF3C5 and GTF3C6. Interacts with GTF3C4 and GTF3C5.

Its subcellular location is the nucleus. Its function is as follows. Involved in RNA polymerase III-mediated transcription. Integral, tightly associated component of the DNA-binding TFIIIC2 subcomplex that directly binds tRNA and virus-associated RNA promoters. This chain is General transcription factor 3C polypeptide 6 (GTF3C6), found in Homo sapiens (Human).